The chain runs to 135 residues: uncharacterized protein (135 aa).

The chain crosses the membrane as a helical span at residues 4 to 24 (LGVFLILASIVCGVVAICGCT).

The protein localises to the membrane. This is an uncharacterized protein from Methanocaldococcus jannaschii (strain ATCC 43067 / DSM 2661 / JAL-1 / JCM 10045 / NBRC 100440) (Methanococcus jannaschii).